The primary structure comprises 439 residues: Exosome complex component RRP45 (439 aa).

The interval 1-268 is ARE binding; the sequence is MKETPLSNCE…AEITELILKA (268 aa). A Phosphoserine modification is found at S65. K297 bears the N6-acetyllysine; alternate mark. K297 participates in a covalent cross-link: Glycyl lysine isopeptide (Lys-Gly) (interchain with G-Cter in SUMO1); alternate. K297 participates in a covalent cross-link: Glycyl lysine isopeptide (Lys-Gly) (interchain with G-Cter in SUMO2); alternate. S306, V325, S327, and S346 each carry phosphoserine. Disordered regions lie at residues 335 to 363 and 391 to 439; these read GTAQ…GGGD and LSDS…RAAN. Positions 349 to 361 are enriched in acidic residues; the sequence is DLEDSEKEDDEGG. Phosphoserine is present on residues S392, S394, K409, and I411. K419 is covalently cross-linked (Glycyl lysine isopeptide (Lys-Gly) (interchain with G-Cter in SUMO2)). Residues 425 to 439 are compositionally biased toward basic residues; that stretch reads SKKPVKRRKKKRAAN.

Belongs to the RNase PH family. In terms of assembly, component of the RNA exosome core complex (Exo-9), composed of EXOSC1, EXOSC2, EXOSC3, EXOSC4, EXOSC5, EXOSC6, EXOSC7, EXOSC8 and EXOSC9; within the complex interacts with EXOSC3, EXOSC4, EXOSC5 and DIS3. The catalytically inactive RNA exosome core complex (Exo-9) associates with the catalytic subunit EXOSC10/RRP6. Exo-9 may associate with DIS3 to form the nucleolar exosome complex, or DIS3L to form the cytoplasmic exosome complex. Exo-9 is formed by a hexameric base ring consisting of the heterodimers EXOSC4-EXOSC9, EXOSC5-EXOSC8 and EXOSC6-EXOSC7, and a cap ring consisting of EXOSC1, EXOSC2 and EXOSC3. The RNA exosome complex associates with cofactors C1D/RRP47, MPHOSPH6/MPP6 and MTREX/MTR4. Interacts (via C-terminus region) with SETX (via N-terminus domain); the interaction enhances SETX sumoylation. Interacts with DIS3; the interaction is direct.

It is found in the cytoplasm. The protein resides in the nucleus. It localises to the nucleolus. Its subcellular location is the nucleoplasm. Functionally, non-catalytic component of the RNA exosome complex which has 3'-&gt;5' exoribonuclease activity and participates in a multitude of cellular RNA processing and degradation events. In the nucleus, the RNA exosome complex is involved in proper maturation of stable RNA species such as rRNA, snRNA and snoRNA, in the elimination of RNA processing by-products and non-coding 'pervasive' transcripts, such as antisense RNA species and promoter-upstream transcripts (PROMPTs), and of mRNAs with processing defects, thereby limiting or excluding their export to the cytoplasm. The RNA exosome may be involved in Ig class switch recombination (CSR) and/or Ig variable region somatic hypermutation (SHM) by targeting AICDA deamination activity to transcribed dsDNA substrates. In the cytoplasm, the RNA exosome complex is involved in general mRNA turnover and specifically degrades inherently unstable mRNAs containing AU-rich elements (AREs) within their 3' untranslated regions, and in RNA surveillance pathways, preventing translation of aberrant mRNAs. It seems to be involved in degradation of histone mRNA. The catalytic inactive RNA exosome core complex of 9 subunits (Exo-9) is proposed to play a pivotal role in the binding and presentation of RNA for ribonucleolysis, and to serve as a scaffold for the association with catalytic subunits and accessory proteins or complexes. EXOSC9 binds to ARE-containing RNAs. This Homo sapiens (Human) protein is Exosome complex component RRP45 (EXOSC9).